Reading from the N-terminus, the 470-residue chain is ATP synthase subunit beta (470 aa).

ATP is bound at residue 157–164 (GGAGVGKT).

Belongs to the ATPase alpha/beta chains family. F-type ATPases have 2 components, CF(1) - the catalytic core - and CF(0) - the membrane proton channel. CF(1) has five subunits: alpha(3), beta(3), gamma(1), delta(1), epsilon(1). CF(0) has three main subunits: a(1), b(2) and c(9-12). The alpha and beta chains form an alternating ring which encloses part of the gamma chain. CF(1) is attached to CF(0) by a central stalk formed by the gamma and epsilon chains, while a peripheral stalk is formed by the delta and b chains.

The protein localises to the cell inner membrane. The enzyme catalyses ATP + H2O + 4 H(+)(in) = ADP + phosphate + 5 H(+)(out). Produces ATP from ADP in the presence of a proton gradient across the membrane. The catalytic sites are hosted primarily by the beta subunits. This is ATP synthase subunit beta from Geobacter metallireducens (strain ATCC 53774 / DSM 7210 / GS-15).